The sequence spans 203 residues: Proteasome subunit beta 1 (203 aa).

The propeptide at 1 to 7 (MTEKLKG) is removed in mature form; by autocatalysis. The active-site Nucleophile is Thr8.

It belongs to the peptidase T1B family. As to quaternary structure, the 20S proteasome core is composed of 14 alpha and 14 beta subunits that assemble into four stacked heptameric rings, resulting in a barrel-shaped structure. The two inner rings, each composed of seven catalytic beta subunits, are sandwiched by two outer rings, each composed of seven alpha subunits. The catalytic chamber with the active sites is on the inside of the barrel. Has a gated structure, the ends of the cylinder being occluded by the N-termini of the alpha-subunits. Is capped at one or both ends by the proteasome regulatory ATPase, PAN.

It localises to the cytoplasm. It carries out the reaction Cleavage of peptide bonds with very broad specificity.. With respect to regulation, the formation of the proteasomal ATPase PAN-20S proteasome complex, via the docking of the C-termini of PAN into the intersubunit pockets in the alpha-rings, triggers opening of the gate for substrate entry. Interconversion between the open-gate and close-gate conformations leads to a dynamic regulation of the 20S proteasome proteolysis activity. Functionally, component of the proteasome core, a large protease complex with broad specificity involved in protein degradation. This Thermococcus kodakarensis (strain ATCC BAA-918 / JCM 12380 / KOD1) (Pyrococcus kodakaraensis (strain KOD1)) protein is Proteasome subunit beta 1.